Here is a 249-residue protein sequence, read N- to C-terminus: Solute carrier family 25 member 35 (249 aa).

Solcar repeat units lie at residues 1–90 (MDFL…AEAG) and 152–243 (QSWK…LRMV). A run of 4 helical transmembrane segments spans residues 38–58 (TYQR…KVDG), 59–79 (LAAL…MNGI), 154–174 (WKVA…AMTP), and 226–249 (LGPH…TYTK).

Belongs to the mitochondrial carrier (TC 2.A.29) family.

The protein resides in the mitochondrion inner membrane. It carries out the reaction a dicarboxylate(in) + sulfate(out) = a dicarboxylate(out) + sulfate(in). Putative antiporter that exchanges dicarboxylates and sulfur oxoanions across the inner membrane of mitochondria. In Bos taurus (Bovine), this protein is Solute carrier family 25 member 35 (SLC25A35).